The primary structure comprises 99 residues: uncharacterized protein (99 aa).

Residues Glu-3–Tyr-68 are a coiled coil.

This is an uncharacterized protein from Aquifex aeolicus (strain VF5).